The sequence spans 299 residues: NmrA-like family domain-containing protein 1 (299 aa).

NADP(+) contacts are provided by residues 11–16 (GGTGAQ), 37–41 (RNPRK), 58–59 (DQ), Gln-62, 79–81 (TNY), Lys-92, Lys-133, and 155–158 (YFEN). Residues 153–189 (PCYFENLLSHFLPQKAPDGKSYLLSLPTGDVPMDGMS) are interaction with ASS1.

Belongs to the NmrA-type oxidoreductase family. Homodimer. Interacts with ASS1. Interaction is enhanced by low NADPH/NADP(+) ratios, which results in inhibition of ASS1 activity.

The protein localises to the cytoplasm. It localises to the perinuclear region. Its subcellular location is the nucleus. Redox sensor protein. Undergoes restructuring and subcellular redistribution in response to changes in intracellular NADPH/NADP(+) levels. At low NADPH concentrations the protein is found mainly as a monomer, and binds argininosuccinate synthase (ASS1), the enzyme involved in nitric oxide synthesis. Association with ASS1 impairs its activity and reduces the production of nitric oxide, which subsecuently prevents apoptosis. Under normal NADPH concentrations, the protein is found as a dimer and hides the binding site for ASS1. The homodimer binds one molecule of NADPH. Has higher affinity for NADPH than for NADP(+). Binding to NADPH is necessary to form a stable dimer. This chain is NmrA-like family domain-containing protein 1 (NMRAL1), found in Homo sapiens (Human).